A 72-amino-acid chain; its full sequence is Heat-stable enterotoxin ST-IA/ST-P (72 aa).

Residues 1–19 form the signal peptide; sequence MKKLMLAIFISVLSFPSFS. Residues 20-54 constitute a propeptide that is removed on maturation; the sequence is QSTESLDSSKEKITLETKKCDVVKNNSEKKSENMN. Disulfide bonds link Cys-59/Cys-64, Cys-60/Cys-68, and Cys-63/Cys-71.

The protein belongs to the heat-stable enterotoxin family.

It localises to the secreted. Its function is as follows. Toxin which activates the particulate form of guanylate cyclase and increases cyclic GMP levels within the host intestinal epithelial cells. In Escherichia coli, this protein is Heat-stable enterotoxin ST-IA/ST-P (sta1).